The chain runs to 308 residues: Probable manganese-dependent inorganic pyrophosphatase (308 aa).

Mn(2+)-binding residues include His9, Asp13, Asp15, Asp75, His97, and Asp149.

Belongs to the PPase class C family. It depends on Mn(2+) as a cofactor.

The protein localises to the cytoplasm. It carries out the reaction diphosphate + H2O = 2 phosphate + H(+). This Listeria monocytogenes serotype 4a (strain HCC23) protein is Probable manganese-dependent inorganic pyrophosphatase.